The following is a 46-amino-acid chain: MQVLNSLRSAKARHPDCQIVRRKGRLYVICKTNPRFKAVQGRKKRK.

This sequence belongs to the bacterial ribosomal protein bL36 family.

The sequence is that of Large ribosomal subunit protein bL36B from Cronobacter sakazakii (strain ATCC BAA-894) (Enterobacter sakazakii).